A 23-amino-acid polypeptide reads, in one-letter code: Endochitinase B (23 aa).

Belongs to the glycosyl hydrolase 19 family. Chitinase class I subfamily.

The catalysed reaction is Random endo-hydrolysis of N-acetyl-beta-D-glucosaminide (1-&gt;4)-beta-linkages in chitin and chitodextrins.. Functionally, defense against chitin-containing fungal pathogens. The chain is Endochitinase B from Pisum sativum (Garden pea).